A 153-amino-acid polypeptide reads, in one-letter code: 3-hydroxyacyl-[acyl-carrier-protein] dehydratase FabZ (153 aa).

The active site involves H54.

It belongs to the thioester dehydratase family. FabZ subfamily.

It localises to the cytoplasm. It catalyses the reaction a (3R)-hydroxyacyl-[ACP] = a (2E)-enoyl-[ACP] + H2O. Involved in unsaturated fatty acids biosynthesis. Catalyzes the dehydration of short chain beta-hydroxyacyl-ACPs and long chain saturated and unsaturated beta-hydroxyacyl-ACPs. This chain is 3-hydroxyacyl-[acyl-carrier-protein] dehydratase FabZ, found in Shewanella denitrificans (strain OS217 / ATCC BAA-1090 / DSM 15013).